Here is a 254-residue protein sequence, read N- to C-terminus: uncharacterized protein (254 aa).

This sequence belongs to the methyltransferase superfamily.

This is an uncharacterized protein from Mycobacterium bovis (strain ATCC BAA-935 / AF2122/97).